Reading from the N-terminus, the 455-residue chain is Acetylcholinesterase collagenic tail peptide (455 aa).

The N-terminal stretch at 1-22 (MVVLNPMTLGIYLQLFFLSIVS) is a signal peptide. The PRAD stretch occupies residues 51-67 (CCLLTPPPPPLFPPPFF). The interval 90 to 282 (QSPCMQGSLG…QLIMGPKGER (193 aa)) is disordered. 2 Collagen-like domains span residues 96 to 269 (GSLG…PGPP) and 277 to 291 (GPKG…PGRC). Positions 101-112 (PGPPGPQGPPGL) are enriched in pro residues. Residues 118-127 (PKGEKGELGR) show a composition bias toward basic and acidic residues. Residues 130–133 (RKGR) are heparan sulfate proteoglycan binding. Residues 134-152 (PGPPGVPGMPGPIGWPGPE) are compositionally biased toward pro residues. A compositionally biased stretch (basic and acidic residues) spans 182–200 (RGEKGSRGEKGDLGPKGEK). The tract at residues 235 to 238 (KRGK) is heparan sulfate proteoglycan binding. Over residues 262-271 (RPGPPGPPPA) the composition is skewed to pro residues.

Belongs to the COLQ family. As to quaternary structure, homotrimer. Component of the asymmetric form of AChE, a disulfide-bonded oligomer composed of the collagenic subunits (Q) and a variable number of asymmetric catalytic subunits (T). The N-terminal of a collagenic subunit (Q) associates with the C-terminal of a catalytic subunit (T). In terms of processing, the triple-helical tail is stabilized by disulfide bonds at each end. Found at the end plate of skeletal muscle.

The protein resides in the synapse. Its function is as follows. Anchors the catalytic subunits of asymmetric AChE to the synaptic basal lamina. In Homo sapiens (Human), this protein is Acetylcholinesterase collagenic tail peptide (COLQ).